A 952-amino-acid polypeptide reads, in one-letter code: MASTTTSTSSLSSRRQKTGVGSFTINEQIGKGSFATVYRGTHMPSGNLVAIKSVNLSRLNKKLKDNLYVEIEILKSLYHPHIVALIDCRESASHIHLMMEYCELGDLSYFIKKRDRLADNPTLYDMVQKYPMPVEGGLNQVVVRHFFKQLSSAMEFLRERDFVHRDVKPQNLLLIPSPEWIAKRAKGGPEAMKASKESVVAMVGINSLPMLKLADFGFARSLPSTSLAETLCGSPLYMAPEILRYEKYDARADLWSIGTVLYEMMTGRPPFKAINHVQLLQKIEKNQDEIRFPSRGIYSRDLKDIVRRLLKKKPEDRITFPEYFAHPVVTEPIPGLVGDDRPKEKSPETSIVRQPSLRDRQRESPTVKHIDTAYESLITRDIGEQSPRTPNIESNQPFGTPGRSSGRPDSRDRPSPVSAATAPNVDTLPRQRDRKDRTEPNYAPIVRTGSTKQRYDEQANLQPKNEVQSSNSITEAEQDVRDAREYVLVEKKAVEVNAFADEMAANPRLGRANSAPKQLPRRHTSMGEPNSTTGAVAVPPSRIVQRASGRAQPDTSSARNSYGSYGKTGSSPSTASAIAKALQGASVRVFGVSWSPTLIGKGPSPPQLYNPYPAYPTPNAGLIGDGRPIDEDQRVVNIIEDSATRSDVVYGFAEVKYRQLIPLAPSMNHGLGGPNPERTGDAMDEDDGLTVEAIVNLSEEALVLYVKSLSLLSKSMDIAGAWWSRKQRGGIVSGGHTPGSDSSSAAQAGNRINGAVQWVRTRFNEVLEKAELVRLKLVEAQKRLPEDHPGHPNNRSTASRLVGGSSTTDGVVLSSGITAEKLMYDRALEMSRTAAINELANEDLPGCEISYTTAIRMLEAVLENDEELIPRKRSSSLREDKEKSEGGEVNGINFGDRKDVLKVLQMIRTRLQVLKKKMTAIAKHQSMPPPSSSPRRSYSGGTTPTINNTPPK.

The region spanning 23–329 (FTINEQIGKG…FPEYFAHPVV (307 aa)) is the Protein kinase domain. ATP contacts are provided by residues 29-37 (IGKGSFATV) and Lys52. Asp166 functions as the Proton acceptor in the catalytic mechanism. Disordered stretches follow at residues 331–478 (EPIP…EAEQ), 510–573 (GRAN…SSPS), 783–806 (RLPE…GGSS), and 920–952 (AIAK…TPPK). 2 stretches are compositionally biased toward basic and acidic residues: residues 338-347 (GDDRPKEKSP) and 356-372 (SLRD…HIDT). Residues 386 to 398 (SPRTPNIESNQPF) are compositionally biased toward polar residues. A compositionally biased stretch (basic and acidic residues) spans 429 to 439 (PRQRDRKDRTE). 3 stretches are compositionally biased toward polar residues: residues 459-475 (ANLQ…SITE), 553-573 (PDTS…SSPS), and 793-806 (NNRS…GGSS). Low complexity predominate over residues 933–952 (SPRRSYSGGTTPTINNTPPK).

This sequence belongs to the protein kinase superfamily. Ser/Thr protein kinase family. APG1/unc-51/ULK1 subfamily. As to quaternary structure, homodimer. Forms a ternary complex with ATG13 and ATG17.

The protein localises to the cytoplasm. It is found in the preautophagosomal structure membrane. The enzyme catalyses L-seryl-[protein] + ATP = O-phospho-L-seryl-[protein] + ADP + H(+). It catalyses the reaction L-threonyl-[protein] + ATP = O-phospho-L-threonyl-[protein] + ADP + H(+). Its function is as follows. Serine/threonine protein kinase involved in the cytoplasm to vacuole transport (Cvt) and found to be essential in autophagy, where it is required for the formation of autophagosomes. Involved in the clearance of protein aggregates which cannot be efficiently cleared by the proteasome. Required for selective autophagic degradation of the nucleus (nucleophagy) as well as for mitophagy which contributes to regulate mitochondrial quantity and quality by eliminating the mitochondria to a basal level to fulfill cellular energy requirements and preventing excess ROS production. Also involved in endoplasmic reticulum-specific autophagic process, in selective removal of ER-associated degradation (ERAD) substrates. Plays a key role in ATG9 and ATG23 cycling through the pre-autophagosomal structure and is necessary to promote ATG18 binding to ATG9 through phosphorylation of ATG9. Catalyzes phosphorylation of ATG4, decreasing the interaction between ATG4 and ATG8 and impairing deconjugation of PE-conjugated forms of ATG8. In Botryotinia fuckeliana (strain B05.10) (Noble rot fungus), this protein is Serine/threonine-protein kinase atg1.